The following is a 613-amino-acid chain: MPPLRSRTTTAGRNAAGARALWRATGLTDSDFGKPIVAIANSYTQFVPGHVHLKDVGEIVAEAVRAAGGVPREFHTIAVDDGIAMGHGGMLYSLPSREIIADSVEYMVNAHTADALVCISNCDKITPGMLNAAMRLNIPTVFVSGGPMEAGKAVVVGGVAQAPTDLITAISASANSSVTDEGLSEVERSACPTCGSCSGMFTANSMNCLTEALGLALPGNGSTLATHAARRALFEKAGRVVVDIANRWYREDDASVLPRNVANAKAFRNAMALDVAMGGSTNTVLHTLAAAQEGEIDFDLETIDEISRKVPCLSKVSPNSDYHMEDVHRAGGIPAILGELRRAGLLHTDVTTVHTPTLEEWLDTWDIRSGKASAEAIELFHAAPGGVRTTEPFSTDNRWSSLDTDAAGGCIRDKEHAYTVEGGLVVLRGNIAPDGAILKTAGIDEDLFSFQGPAVVVESQEEAVSVILGKKIKPGDVLVVRYEGPAGGPGMQEMLHPTAFLKGAGLGKQCALITDGRFSGGTSGLSIGHISPEAASGGVIGLVENGDQIRIDVATRTLEVLVDDAVLAERRAKMEASERPWQPVDRDRTVTTALRAYAALATSADKGAVRRVP.

A Mg(2+)-binding site is contributed by aspartate 81. Residue cysteine 122 participates in [2Fe-2S] cluster binding. Mg(2+) contacts are provided by aspartate 123 and lysine 124. Position 124 is an N6-carboxylysine (lysine 124). Cysteine 197 is a [2Fe-2S] cluster binding site. Glutamate 493 provides a ligand contact to Mg(2+). Serine 519 serves as the catalytic Proton acceptor.

Belongs to the IlvD/Edd family. Homodimer. The cofactor is [2Fe-2S] cluster. Requires Mg(2+) as cofactor.

The catalysed reaction is (2R)-2,3-dihydroxy-3-methylbutanoate = 3-methyl-2-oxobutanoate + H2O. It carries out the reaction (2R,3R)-2,3-dihydroxy-3-methylpentanoate = (S)-3-methyl-2-oxopentanoate + H2O. Its pathway is amino-acid biosynthesis; L-isoleucine biosynthesis; L-isoleucine from 2-oxobutanoate: step 3/4. The protein operates within amino-acid biosynthesis; L-valine biosynthesis; L-valine from pyruvate: step 3/4. In terms of biological role, functions in the biosynthesis of branched-chain amino acids. Catalyzes the dehydration of (2R,3R)-2,3-dihydroxy-3-methylpentanoate (2,3-dihydroxy-3-methylvalerate) into 2-oxo-3-methylpentanoate (2-oxo-3-methylvalerate) and of (2R)-2,3-dihydroxy-3-methylbutanoate (2,3-dihydroxyisovalerate) into 2-oxo-3-methylbutanoate (2-oxoisovalerate), the penultimate precursor to L-isoleucine and L-valine, respectively. This is Dihydroxy-acid dehydratase 3 from Nocardia farcinica (strain IFM 10152).